A 148-amino-acid chain; its full sequence is Nucleoside diphosphate kinase (148 aa).

K9, F57, R85, T91, R102, and N112 together coordinate ATP. T91 carries the phosphothreonine modification. Residue H115 is the Pros-phosphohistidine intermediate of the active site. A Phosphoserine modification is found at S122.

Belongs to the NDK family. Homotetramer. It depends on Mg(2+) as a cofactor.

The protein localises to the cytoplasm. It catalyses the reaction a 2'-deoxyribonucleoside 5'-diphosphate + ATP = a 2'-deoxyribonucleoside 5'-triphosphate + ADP. The catalysed reaction is a ribonucleoside 5'-diphosphate + ATP = a ribonucleoside 5'-triphosphate + ADP. Functionally, major role in the synthesis of nucleoside triphosphates other than ATP. The ATP gamma phosphate is transferred to the NDP beta phosphate via a ping-pong mechanism, using a phosphorylated active-site intermediate. The sequence is that of Nucleoside diphosphate kinase from Bacillus anthracis.